Reading from the N-terminus, the 373-residue chain is Flagellar P-ring protein (373 aa).

Positions 1-26 (MKLFFRFLTLVAVLAMSLADVAPAWA) are cleaved as a signal peptide.

It belongs to the FlgI family. As to quaternary structure, the basal body constitutes a major portion of the flagellar organelle and consists of four rings (L,P,S, and M) mounted on a central rod.

The protein resides in the periplasm. It localises to the bacterial flagellum basal body. Assembles around the rod to form the L-ring and probably protects the motor/basal body from shearing forces during rotation. This is Flagellar P-ring protein from Rhizobium leguminosarum bv. trifolii (strain WSM2304).